Reading from the N-terminus, the 271-residue chain is MTTLTHIPQGTPITLESIGKRYGNRTVLDNLQLRITAGQFVAVVGRSGCGKSTLLRLLAGLEAASDGTLLSGNALLSHAKDETRLMFQEARLLPWKKVIDNVGLGLRGHWRDEALQVLDTVGLADRANEWPAALSGGQKQRVALARALIHRPRLLLLDEPLGALDALTRIEMQGLIERLWQQHGFTVLLVTHDVSEAIALADRVLLIEEGRIGLDLAIDLPRPRRKGSAKLAALEAEVLERVLSPPQGIEASRQGIKASRQGTATSRRVAN.

The ABC transporter domain occupies 13–234 (ITLESIGKRY…RKGSAKLAAL (222 aa)). 45-52 (GRSGCGKS) is an ATP binding site. Residues 250–271 (EASRQGIKASRQGTATSRRVAN) are disordered. A compositionally biased stretch (polar residues) spans 260–271 (RQGTATSRRVAN).

Belongs to the ABC transporter superfamily. Aliphatic sulfonates importer (TC 3.A.1.17.2) family. As to quaternary structure, the complex is composed of two ATP-binding proteins (SsuB), two transmembrane proteins (SsuC) and a solute-binding protein (SsuA).

It is found in the cell inner membrane. The enzyme catalyses ATP + H2O + aliphatic sulfonate-[sulfonate-binding protein]Side 1 = ADP + phosphate + aliphatic sulfonateSide 2 + [sulfonate-binding protein]Side 1.. Functionally, part of the ABC transporter complex SsuABC involved in aliphatic sulfonates import. Responsible for energy coupling to the transport system. The polypeptide is Aliphatic sulfonates import ATP-binding protein SsuB (Yersinia pestis bv. Antiqua (strain Antiqua)).